A 331-amino-acid chain; its full sequence is MNVIMAGIDYTLAPIDIREKFSFTKSTLQAVYNDLLKNENIFGAVIVSTCNRTELYLSCEEGLYINPFELLCDAANFDYEEYSNMHVLRTGVDVIRHLCELACGVKSQIWGEDQIITQVRNAIELAREMNASDSTLEVMFRIAVTSAKKVKTTLKLSSTERSIAYSALKIIKSKENISKALVIGNGEIGRLMASILIENGYDTTITLRRYRHGDNIIPLGAKTIEYVARYEKLKDCDVVISATLSPHYTLEIDKIDRIKYPRLFIDLAVPRDIDPKIKSLDNVELYDLDSIYAGEVDKNRTEQMIQVKKIIDKYIFDYYRWYEYRKRLVLT.

Residues 49-52 (TCNR), Ser-107, 112-114 (EDQ), and Gln-118 contribute to the substrate site. The active-site Nucleophile is Cys-50. 184-189 (GNGEIG) serves as a coordination point for NADP(+).

The protein belongs to the glutamyl-tRNA reductase family. In terms of assembly, homodimer.

It carries out the reaction (S)-4-amino-5-oxopentanoate + tRNA(Glu) + NADP(+) = L-glutamyl-tRNA(Glu) + NADPH + H(+). It functions in the pathway porphyrin-containing compound metabolism; protoporphyrin-IX biosynthesis; 5-aminolevulinate from L-glutamyl-tRNA(Glu): step 1/2. Functionally, catalyzes the NADPH-dependent reduction of glutamyl-tRNA(Glu) to glutamate 1-semialdehyde (GSA). This Acetivibrio thermocellus (strain ATCC 27405 / DSM 1237 / JCM 9322 / NBRC 103400 / NCIMB 10682 / NRRL B-4536 / VPI 7372) (Clostridium thermocellum) protein is Glutamyl-tRNA reductase.